We begin with the raw amino-acid sequence, 91 residues long: Acylphosphatase (91 aa).

One can recognise an Acylphosphatase-like domain in the interval 3–91 (HIKVNVKGQV…TELTKFEVKY (89 aa)). Active-site residues include arginine 18 and asparagine 36.

Belongs to the acylphosphatase family.

It catalyses the reaction an acyl phosphate + H2O = a carboxylate + phosphate + H(+). The protein is Acylphosphatase (acyP) of Oceanobacillus iheyensis (strain DSM 14371 / CIP 107618 / JCM 11309 / KCTC 3954 / HTE831).